We begin with the raw amino-acid sequence, 106 residues long: Pyrimidine/purine nucleoside phosphorylase (106 aa).

The protein belongs to the nucleoside phosphorylase PpnP family.

It catalyses the reaction a purine D-ribonucleoside + phosphate = a purine nucleobase + alpha-D-ribose 1-phosphate. The catalysed reaction is adenosine + phosphate = alpha-D-ribose 1-phosphate + adenine. The enzyme catalyses cytidine + phosphate = cytosine + alpha-D-ribose 1-phosphate. It carries out the reaction guanosine + phosphate = alpha-D-ribose 1-phosphate + guanine. It catalyses the reaction inosine + phosphate = alpha-D-ribose 1-phosphate + hypoxanthine. The catalysed reaction is thymidine + phosphate = 2-deoxy-alpha-D-ribose 1-phosphate + thymine. The enzyme catalyses uridine + phosphate = alpha-D-ribose 1-phosphate + uracil. It carries out the reaction xanthosine + phosphate = alpha-D-ribose 1-phosphate + xanthine. In terms of biological role, catalyzes the phosphorolysis of diverse nucleosides, yielding D-ribose 1-phosphate and the respective free bases. Can use uridine, adenosine, guanosine, cytidine, thymidine, inosine and xanthosine as substrates. Also catalyzes the reverse reactions. This Paraburkholderia xenovorans (strain LB400) protein is Pyrimidine/purine nucleoside phosphorylase.